The sequence spans 286 residues: Pantothenate synthetase (286 aa).

Residue 30–37 coordinates ATP; sequence MGCFHQGH. His37 functions as the Proton donor in the catalytic mechanism. Gln61 is a (R)-pantoate binding site. Gln61 lines the beta-alanine pocket. An ATP-binding site is contributed by 147–150; that stretch reads GEKD. Gln153 provides a ligand contact to (R)-pantoate. 184-187 is a binding site for ATP; that stretch reads MSSR.

Belongs to the pantothenate synthetase family. Homodimer.

The protein resides in the cytoplasm. It catalyses the reaction (R)-pantoate + beta-alanine + ATP = (R)-pantothenate + AMP + diphosphate + H(+). It participates in cofactor biosynthesis; (R)-pantothenate biosynthesis; (R)-pantothenate from (R)-pantoate and beta-alanine: step 1/1. In terms of biological role, catalyzes the condensation of pantoate with beta-alanine in an ATP-dependent reaction via a pantoyl-adenylate intermediate. The chain is Pantothenate synthetase from Desulfotalea psychrophila (strain LSv54 / DSM 12343).